The primary structure comprises 333 residues: Tubulin alpha chain (333 aa).

6 residues coordinate GTP: Ser-48, Gly-52, Thr-53, Thr-88, Asn-115, and Asn-137.

It belongs to the tubulin family. In terms of assembly, dimer of alpha and beta chains. A typical microtubule is a hollow water-filled tube with an outer diameter of 25 nm and an inner diameter of 15 nM. Alpha-beta heterodimers associate head-to-tail to form protofilaments running lengthwise along the microtubule wall with the beta-tubulin subunit facing the microtubule plus end conferring a structural polarity. Microtubules usually have 13 protofilaments but different protofilament numbers can be found in some organisms and specialized cells. Requires Mg(2+) as cofactor. Undergoes a tyrosination/detyrosination cycle, the cyclic removal and re-addition of a C-terminal tyrosine residue by the enzymes tubulin tyrosine carboxypeptidase (TTCP) and tubulin tyrosine ligase (TTL), respectively.

It is found in the cytoplasm. The protein localises to the cytoskeleton. The catalysed reaction is GTP + H2O = GDP + phosphate + H(+). Functionally, tubulin is the major constituent of microtubules, a cylinder consisting of laterally associated linear protofilaments composed of alpha- and beta-tubulin heterodimers. Microtubules grow by the addition of GTP-tubulin dimers to the microtubule end, where a stabilizing cap forms. Below the cap, tubulin dimers are in GDP-bound state, owing to GTPase activity of alpha-tubulin. The protein is Tubulin alpha chain (tuba) of Dictyostelium purpureum (Slime mold).